The sequence spans 405 residues: S-arrestin (405 aa).

T234 is subject to Phosphothreonine.

The protein belongs to the arrestin family. As to quaternary structure, monomer. Homodimer. Homotetramer. Interacts with RHO (via the phosphorylated C-terminus).

It localises to the cell projection. It is found in the cilium. Its subcellular location is the photoreceptor outer segment. The protein localises to the membrane. In terms of biological role, binds to photoactivated, phosphorylated RHO and terminates RHO signaling via G-proteins by competing with G-proteins for the same binding site on RHO. May play a role in preventing light-dependent degeneration of retinal photoreceptor cells. The polypeptide is S-arrestin (SAG) (Canis lupus familiaris (Dog)).